Reading from the N-terminus, the 304-residue chain is MNRLAVEIPGLSLKNPIMPASGCFGFGQEYSKYYDLNELGAIMAKAVTPEPRLGNPTPRVAETASGMLNAIGLQNPGLEHVLAHELPFLEQFETPIIANVAGATEDDYVQVCARIGESKAVKAIELNISCPNVKHGGIAFGTDPEVAHRLTKAVKNVASVPVYVKLSPNVADIVSIAQAIEAAGADGLTMINTLLGMRIDLKTRKPIIANGTGGLSGPAIKPVAIRMIHQVRAVSNIPIIGMGGVQTVDDVLEFLIAGADAVAVGTMNFTDPFICPKLISELPKRMDALGISSLQDLKKERTNQ.

FMN contacts are provided by residues Ser21 and 45–46 (KA). Substrate-binding positions include Lys45 and 69-73 (NAIGL). Positions 99 and 127 each coordinate FMN. Asn127 contributes to the substrate binding site. The Nucleophile role is filled by Cys130. Positions 165 and 191 each coordinate FMN. 192 to 193 (NT) is a binding site for substrate. FMN-binding positions include Gly217, 243–244 (GG), and 265–266 (GT).

This sequence belongs to the dihydroorotate dehydrogenase family. Type 1 subfamily. Heterotetramer of 2 PyrK and 2 PyrD type B subunits. FMN serves as cofactor.

The protein resides in the cytoplasm. The catalysed reaction is (S)-dihydroorotate + NAD(+) = orotate + NADH + H(+). The protein operates within pyrimidine metabolism; UMP biosynthesis via de novo pathway; orotate from (S)-dihydroorotate (NAD(+) route): step 1/1. In terms of biological role, catalyzes the conversion of dihydroorotate to orotate with NAD(+) as electron acceptor. The polypeptide is Dihydroorotate dehydrogenase B (NAD(+)), catalytic subunit (pyrD) (Listeria monocytogenes serovar 1/2a (strain ATCC BAA-679 / EGD-e)).